A 150-amino-acid chain; its full sequence is Large ribosomal subunit protein bL9 (150 aa).

The protein belongs to the bacterial ribosomal protein bL9 family.

Binds to the 23S rRNA. The protein is Large ribosomal subunit protein bL9 of Yersinia enterocolitica serotype O:8 / biotype 1B (strain NCTC 13174 / 8081).